Consider the following 387-residue polypeptide: Protochlorophyllide reductase A, chloroplastic (387 aa).

Residues 1–35 constitute a chloroplast transit peptide; it reads MALQVQAALLPSALSVPKKGNLSAVVKEPGFLSVS.

It belongs to the short-chain dehydrogenases/reductases (SDR) family. POR subfamily.

The protein resides in the plastid. It is found in the chloroplast. The enzyme catalyses chlorophyllide a + NADP(+) = protochlorophyllide a + NADPH + H(+). Its pathway is porphyrin-containing compound metabolism; chlorophyll biosynthesis. In terms of biological role, phototransformation of protochlorophyllide (Pchlide) to chlorophyllide (Chlide). In Oryza sativa subsp. japonica (Rice), this protein is Protochlorophyllide reductase A, chloroplastic (PORA).